An 84-amino-acid polypeptide reads, in one-letter code: Neurotoxin BmK-M10 (84 aa).

The first 19 residues, 1-19 (MNYLVMISFALLLMKGVES), serve as a signal peptide directing secretion. Residues 21–83 (RDAYIAKPEN…VPIRVPGKCQ (63 aa)) form the LCN-type CS-alpha/beta domain. Intrachain disulfides connect cysteine 31–cysteine 82, cysteine 35–cysteine 55, cysteine 41–cysteine 65, and cysteine 45–cysteine 67. Position 84 (arginine 84) is a propeptide, removed by a carboxypeptidase.

As to expression, expressed by the venom gland.

The protein resides in the secreted. Functionally, binds to voltage-dependent sodium channels (Nav) and voltage-dependent delayed rectifier potassium channels and inhibits the inactivation of the activated channels, thereby blocking neuronal transmission. Administration to mice at a dosage of 0.8 mg/kg produces an analgesic effect. This chain is Neurotoxin BmK-M10, found in Olivierus martensii (Manchurian scorpion).